A 557-amino-acid polypeptide reads, in one-letter code: Tight junction-associated protein 1 (557 aa).

The tract at residues 1–37 (MTSAAPAKKPYRKAPPEHRELRLEIPGSRLEQEEPLT) is disordered. Thr-2 bears the N-acetylthreonine mark. A compositionally biased stretch (basic and acidic residues) spans 14 to 23 (APPEHRELRL). A coiled-coil region spans residues 42–171 (MKLLQEENEE…EELNERYRLD (130 aa)). Disordered regions lie at residues 266–303 (MSEG…SPEE) and 309–328 (AFEK…LYPG). Residues 274 to 286 (PASPPAPGSPTPQ) are compositionally biased toward pro residues. Position 300 is a phosphoserine (Ser-300). Positions 316–325 (YPTPSPPHPL) are enriched in pro residues. Phosphothreonine is present on Thr-318. Phosphoserine occurs at positions 320 and 345. Residues 364 to 409 (EEGSERARPSPVPSTPASAQASPHHQPSPAPLTLSAPASSASSEED) form a disordered region. Residues 378-388 (TPASAQASPHH) show a composition bias toward polar residues. Low complexity predominate over residues 394 to 405 (PLTLSAPASSAS). Thr-422 is modified (phosphothreonine). The segment covering 439-456 (LPELQRHFAHSPADRDEV) has biased composition (basic and acidic residues). The segment at 439–557 (LPELQRHFAH…QAQEQGNLLN (119 aa)) is disordered. The residue at position 491 (Ser-491) is a Phosphoserine. Residues 530 to 542 (RSPKRMGVHHLHR) are compositionally biased toward basic residues. Ser-545 carries the phosphoserine modification. Positions 546–557 (LTQAQEQGNLLN) are enriched in polar residues.

Interacts with DLG1. Interacts with ARF6 (GTP-bound form). Ubiquitously expressed.

It localises to the golgi apparatus. The protein resides in the trans-Golgi network. It is found in the cell junction. The protein localises to the tight junction. Its subcellular location is the cell membrane. In terms of biological role, plays a role in regulating the structure of the Golgi apparatus. The chain is Tight junction-associated protein 1 from Homo sapiens (Human).